We begin with the raw amino-acid sequence, 113 residues long: Antisense of depressing factor protein 1 (113 aa).

Over residues 1–11 the composition is skewed to basic residues; it reads MGKCSMKKKGV. Residues 1-35 form a disordered region; the sequence is MGKCSMKKKGVGKNVGVGKKVQKKRSISTAERKRT.

Belongs to the ADF1 family.

The protein localises to the nucleus. Transcriptional repressor which negatively regulates transcription of FYV5 by binding to the promoter on the sense strand. This chain is Antisense of depressing factor protein 1, found in Saccharomyces cerevisiae (strain ATCC 204508 / S288c) (Baker's yeast).